The following is a 632-amino-acid chain: Cytosolic Fe-S cluster assembly factor NAR1 (632 aa).

Cys20 contributes to the [4Fe-4S] cluster binding site. Residues 27 to 53 (LPAKPEDSSNPYEVTTEDKAAASQPPP) form a disordered region. [4Fe-4S] cluster is bound by residues Cys62, Cys65, and Cys68. 2 disordered regions span residues 99–119 (WQTQNGTNGTNGTNGTTNGHS) and 210–231 (LSPETSNPSTKPGSEGAIDTTP). Positions 101–119 (TQNGTNGTNGTNGTTNGHS) are enriched in low complexity. Positions 211–221 (SPETSNPSTKP) are enriched in polar residues. Residues Cys240, Cys295, Cys486, and Cys490 each contribute to the [4Fe-4S] cluster site. Positions 542–573 (GSDSEEEKVDQDGDQNMQDATTNGHTSEPDIV) are disordered. Over residues 544–554 (DSEEEKVDQDG) the composition is skewed to acidic residues. Over residues 555-567 (DQNMQDATTNGHT) the composition is skewed to polar residues.

The protein belongs to the NARF family.

In terms of biological role, component of the cytosolic Fe/S protein assembly machinery. Required for maturation of extramitochondrial Fe/S proteins. May play a role in the transfer of pre-assembled Fe/S clusters to target apoproteins. The sequence is that of Cytosolic Fe-S cluster assembly factor NAR1 (NAR1) from Phaeosphaeria nodorum (strain SN15 / ATCC MYA-4574 / FGSC 10173) (Glume blotch fungus).